The following is a 216-amino-acid chain: Sperm microtubule inner protein 8 (216 aa).

Microtubule inner protein component of sperm flagellar doublet microtubules. Expressed in sperm.

It is found in the cytoplasm. Its subcellular location is the cytoskeleton. The protein resides in the flagellum axoneme. Microtubule inner protein (MIP) part of the dynein-decorated doublet microtubules (DMTs) in flagellum axoneme. May serve to reinforce and thus stabilize the microtubule structure in the sperm flagella. This chain is Sperm microtubule inner protein 8 (SPMIP8), found in Bos taurus (Bovine).